A 238-amino-acid chain; its full sequence is 1-(5-phosphoribosyl)-5-[(5-phosphoribosylamino)methylideneamino] imidazole-4-carboxamide isomerase (238 aa).

The active-site Proton acceptor is Asp-8. Residue Asp-129 is the Proton donor of the active site.

The protein belongs to the HisA/HisF family.

Its subcellular location is the cytoplasm. It catalyses the reaction 1-(5-phospho-beta-D-ribosyl)-5-[(5-phospho-beta-D-ribosylamino)methylideneamino]imidazole-4-carboxamide = 5-[(5-phospho-1-deoxy-D-ribulos-1-ylimino)methylamino]-1-(5-phospho-beta-D-ribosyl)imidazole-4-carboxamide. The protein operates within amino-acid biosynthesis; L-histidine biosynthesis; L-histidine from 5-phospho-alpha-D-ribose 1-diphosphate: step 4/9. The chain is 1-(5-phosphoribosyl)-5-[(5-phosphoribosylamino)methylideneamino] imidazole-4-carboxamide isomerase from Jannaschia sp. (strain CCS1).